A 401-amino-acid chain; its full sequence is Adaptive-response sensory kinase SasA (401 aa).

The region spanning 175–400 is the Histidine kinase domain; that stretch reads MLVHDLRNPL…WFHFTLPVYP (226 aa). Residue His-178 is modified to Phosphohistidine; by autocatalysis.

Homooligomerizes. Interacts with KaiC. Participates in the KaiABC clock complex, whose core is composed of a KaiC homohexamer, 6 KaiB and up to 6 KaiA dimers. SasA and KaiB(fs) compete to bind to KaiC.

The catalysed reaction is ATP + protein L-histidine = ADP + protein N-phospho-L-histidine.. Its function is as follows. Member of the two-component regulatory system SasA/RpaA involved in genome-wide circadian gene expression. One of several clock output pathways. Participates in the Kai clock protein complex, the main circadian regulator in cyanobacteria, via its interaction with KaiC. KaiC enhances the autophosphorylation activity of SasA, which then transfers its phosphate group to RpaA to activate it. In addition to its output function, recruits fold-shifted KaiB (KaiB(fs)) to KaiC to cooperatively form the KaiB(6):KaiC(6) complex (independent of SasA kinase activity). Required for robustness of the circadian rhythm of gene expression and is involved in clock output, also required for adaptation to light/dark cycles. This chain is Adaptive-response sensory kinase SasA, found in Nostoc sp. (strain PCC 7120 / SAG 25.82 / UTEX 2576).